Consider the following 1345-residue polypeptide: Rho guanine nucleotide exchange factor 10 (1345 aa).

2 disordered regions span residues 1–84 (MEQG…PAKL) and 99–120 (TPLQ…GVGL). Acidic residues predominate over residues 22 to 39 (NNEEEGELFDFDSGDEVP). A compositionally biased stretch (basic and acidic residues) spans 40 to 54 (EADRQVPSADDRTRG). A compositionally biased stretch (polar residues) spans 102–111 (QEDQPSSPDA). Residue serine 157 is modified to Phosphoserine. 2 disordered regions span residues 158 to 195 (VEEE…SALA) and 207 to 273 (MENP…IPRS). Residues 171-191 (QCNSLSSEDLPHSSEQGSQEG) show a composition bias toward polar residues. Residues 224–239 (DSEPDEMIYDDVENGE) are compositionally biased toward acidic residues. Residues 242-255 (GNSSPEYGWSSSEF) show a composition bias toward low complexity. Residues 307–335 (GAMEIQQAKQRQERKMQKLMKAAKEGTKD) are a coiled coil. Phosphoserine is present on serine 355. Residues 397 to 584 (VRRYILGSIV…ETLAEKLNER (188 aa)) form the DH domain. Disordered regions lie at residues 1202-1237 (DRAR…QPDT) and 1253-1306 (KNDL…RASS). Over residues 1256 to 1271 (LSSSSGSLNLSHGSSS) the composition is skewed to low complexity. Residue serine 1262 is modified to Phosphoserine. Glutamine 1314 is modified (N5-methylglutamine).

Methylated at Gln-1314 by N6AMT1. As to expression, ubiquitously expressed.

Its function is as follows. May play a role in developmental myelination of peripheral nerves. This is Rho guanine nucleotide exchange factor 10 (Arhgef10) from Mus musculus (Mouse).